The chain runs to 639 residues: mRNA export factor (639 aa).

Disordered stretches follow at residues 1–45 (MQAE…SLES), 63–287 (LLGD…KWGA), and 322–355 (CTARDPARAHDSGAECPPTEKRDERRTCAPSQPR). Basic residues predominate over residues 142–152 (PRRRTHARSRS). Positions 153–169 (PRAGSTSSQQPPSSSGG) are enriched in low complexity. The span at 175–189 (VRREAGDRETSEKPA) shows a compositional bias: basic and acidic residues. The span at 203–215 (HQCQSPPAQTASQ) shows a compositional bias: polar residues. 2 stretches are compositionally biased toward basic and acidic residues: residues 234–247 (RTPHDHQERRHEGA) and 326–348 (DPARAHDSGAECPPTEKRDERRT). Zn(2+) contacts are provided by C525, H606, C610, and C615. The CHC2-type zinc-finger motif lies at 525–615 (CHLAASKSPL…HANVCRKEEC (91 aa)).

The protein belongs to the HHV-1 ICP27 protein family.

It localises to the host cytoplasm. The protein resides in the host nucleus. Multifunctional regulator of the expression of viral genes that mediates nuclear export of viral intronless mRNAs. This immediate early (EI) protein promotes the nuclear export of viral intronless mRNAs. This Amazona oratrix (yellow-headed parrot) protein is mRNA export factor.